We begin with the raw amino-acid sequence, 376 residues long: tRNA-specific 2-thiouridylase MnmA (376 aa).

ATP contacts are provided by residues 14 to 21 (GMSGGVDS) and Met-40. Residues 100–102 (NPD) are interaction with target base in tRNA. Cys-105 acts as the Nucleophile in catalysis. An intrachain disulfide couples Cys-105 to Cys-202. Residue Gly-129 coordinates ATP. Positions 152–154 (KDQ) are interaction with tRNA. The active-site Cysteine persulfide intermediate is the Cys-202. Residues 315-316 (RY) are interaction with tRNA.

It belongs to the MnmA/TRMU family.

Its subcellular location is the cytoplasm. The enzyme catalyses S-sulfanyl-L-cysteinyl-[protein] + uridine(34) in tRNA + AH2 + ATP = 2-thiouridine(34) in tRNA + L-cysteinyl-[protein] + A + AMP + diphosphate + H(+). Functionally, catalyzes the 2-thiolation of uridine at the wobble position (U34) of tRNA, leading to the formation of s(2)U34. In Lactococcus lactis subsp. cremoris (strain SK11), this protein is tRNA-specific 2-thiouridylase MnmA.